Here is a 173-residue protein sequence, read N- to C-terminus: Crossover junction endodeoxyribonuclease RuvC (173 aa).

Active-site residues include Asp-8, Glu-67, and Asp-139. Residues Asp-8, Glu-67, and Asp-139 each contribute to the Mg(2+) site.

The protein belongs to the RuvC family. As to quaternary structure, homodimer which binds Holliday junction (HJ) DNA. The HJ becomes 2-fold symmetrical on binding to RuvC with unstacked arms; it has a different conformation from HJ DNA in complex with RuvA. In the full resolvosome a probable DNA-RuvA(4)-RuvB(12)-RuvC(2) complex forms which resolves the HJ. The cofactor is Mg(2+).

Its subcellular location is the cytoplasm. The enzyme catalyses Endonucleolytic cleavage at a junction such as a reciprocal single-stranded crossover between two homologous DNA duplexes (Holliday junction).. Its function is as follows. The RuvA-RuvB-RuvC complex processes Holliday junction (HJ) DNA during genetic recombination and DNA repair. Endonuclease that resolves HJ intermediates. Cleaves cruciform DNA by making single-stranded nicks across the HJ at symmetrical positions within the homologous arms, yielding a 5'-phosphate and a 3'-hydroxyl group; requires a central core of homology in the junction. The consensus cleavage sequence is 5'-(A/T)TT(C/G)-3'. Cleavage occurs on the 3'-side of the TT dinucleotide at the point of strand exchange. HJ branch migration catalyzed by RuvA-RuvB allows RuvC to scan DNA until it finds its consensus sequence, where it cleaves and resolves the cruciform DNA. In Yersinia enterocolitica serotype O:8 / biotype 1B (strain NCTC 13174 / 8081), this protein is Crossover junction endodeoxyribonuclease RuvC.